The chain runs to 329 residues: Ceramide synthase hyl-2 (329 aa).

N-linked (GlcNAc...) asparagine glycosylation is present at Asn22. The next 7 membrane-spanning stretches (helical) occupy residues 41–61 (VLTG…IFVP), 95–115 (ALYY…ESHL), 134–154 (VAWY…GILF), 162–182 (FWQM…SWTM), 187–207 (VGTL…VGKI), 221–241 (FAGV…FWII), and 270–290 (FIML…YILF). The 213-residue stretch at 86 to 298 (SRMAECAMRA…LFKIAYDTIQ (213 aa)) folds into the TLC domain.

This sequence belongs to the sphingosine N-acyltransferase family. As to expression, strong expression in the gut, the posterior bulb of the pharynx, the hypoderm, and unidentified cells of the head and the tail.

The protein resides in the membrane. The catalysed reaction is a very long-chain fatty acyl-CoA + a sphingoid base = an N-(very-long-chain fatty acyl)-sphingoid base + CoA + H(+). It carries out the reaction a fatty acyl-CoA + sphinganine = an N-acylsphinganine + CoA + H(+). It catalyses the reaction docosanoyl-CoA + sphinganine = N-docosanoylsphinganine + CoA + H(+). The enzyme catalyses sphinganine + tetradecanoyl-CoA = N-(tetradecanoyl)-sphinganine + CoA + H(+). The catalysed reaction is eicosanoyl-CoA + sphinganine = N-eicosanoylsphinganine + CoA + H(+). It carries out the reaction 15-methylhexadecasphinganine + a fatty acyl-CoA = an N-acyl-15-methylhexadecasphinganine + CoA + H(+). It functions in the pathway lipid metabolism; sphingolipid metabolism. Functionally, catalyzes the acylation of sphingoid bases to form ceramides, which are key players in cell signaling events such as tolerances to heat, oxidation, and ultraviolet stress. C.elegans contain specific sphingoid bases, which are unique or different in structure compared to the sphingoid bases found in other animals. Two examples of these distinctive compounds are: 15-methylhexadecasphinganine and 15-methylhexadecasphing-4-enine. Exhibits substrate preference for long and very long fatty acyl-coA chains (C20-23). Required for adaptation of the nematode to anoxia. Anoxia tolerance may require one or more of the ceramide species that are either specifically or preferentially synthesized by HYL-2, and seems to be affected by a pathway that is parallel to that involving daf-2. The chain is Ceramide synthase hyl-2 (hyl-2) from Caenorhabditis elegans.